The chain runs to 392 residues: Isocitrate dehydrogenase [NAD] subunit gamma, mitochondrial (392 aa).

Residues 1–39 (MALKVATAAGGAVKAALRPALLWRPWEVLGSHEAPRRSF) constitute a mitochondrion transit peptide. Positions 119 and 132 each coordinate citrate. Substrate contacts are provided by Arg135, Arg166, and Asp253. Residue Asp253 participates in Mn(2+) binding. Residues Asn311, Thr312, and Asn323 each coordinate ADP.

It belongs to the isocitrate and isopropylmalate dehydrogenases family. In terms of assembly, heterooligomer of subunits alpha (IDH3A), beta (IDH3B), and gamma (IDH3G) in the apparent ratio of 2:1:1. The heterodimer containing one IDH3A and one IDH3B subunit and the heterodimer containing one IDH3A and one IDH3G subunit assemble into a heterotetramer (which contains two subunits of IDH3A, one of IDH3B and one of IDH3G) and further into the heterooctamer. It depends on Mg(2+) as a cofactor. The cofactor is Mn(2+).

The protein resides in the mitochondrion. The heterotetramer and the heterodimer composed of IDH3A and IDH3G subunits can be allosterically activated by citrate (CIT) or/and ADP, and the two activators can act independently or synergistically. The heterodimer composed of IDH3A and IDH3B subunits cannot be allosterically regulated and the allosteric regulation of the heterotetramer is through the IDH3G subunit and not the IDH3B subunit. The IDH3G subunit contains the allosteric site which consists of a CIT-binding site and an ADP-binding site, and the binding of CIT and ADP causes conformational changes at the allosteric site which are transmitted to the active site in the catalytic subunit (IDH3A) through a cascade of conformational changes at the heterodimer interface, leading to stabilization of the isocitrate-binding at the active site and thus activation of the enzyme. ATP can activate the heterotetramer and the heterodimer composed of IDH3A and IDH3G subunits at low concentrations but inhibits their activities at high concentrations, whereas ATP exhibits only inhibitory effect on the heterodimer composed of IDH3A and IDH3B subunits. In terms of biological role, regulatory subunit which plays a role in the allosteric regulation of the enzyme catalyzing the decarboxylation of isocitrate (ICT) into alpha-ketoglutarate. The heterodimer composed of the alpha (IDH3A) and beta (IDH3B) subunits and the heterodimer composed of the alpha (IDH3A) and gamma (IDH3G) subunits, have considerable basal activity but the full activity of the heterotetramer (containing two subunits of IDH3A, one of IDH3B and one of IDH3G) requires the assembly and cooperative function of both heterodimers. In Bos taurus (Bovine), this protein is Isocitrate dehydrogenase [NAD] subunit gamma, mitochondrial (IDH3G).